The primary structure comprises 505 residues: MVSIRPDEISAILKQQIEDYDKSVSVSNVGTVLQVGDGIARVYGLDKVMAGELVVFEDGTEGLALNLEDDNVGVVLMGEGYGIQEGSTVKATGKIASVPVGEAMLGRVVNPLGQPMDGKGEIASTDVRLIENPAPGIIQRKSVHEPMQTGITAIDAMIPIGRGQRELIIGDRQTGKTAIAIDTIINQKSEDVVCVYVAIGQKAASVAQVTEVLRERGALDYTVIVAAGASEAASLQYLAPYTGAAIAEHFMYQGKATLVIYDDLTKQAQAYRQMSLLLRRPPGREAYPGDVFYCHSRLLERAAKLSDAMGKGSMTALPIIETQAGDVSAYIPTNVISITDGQVFLSSDLFNSGLRPAINVGISVSRVGGAAQTKAIKKIAGTLKLELAQFDELAAFSQFASDLDAATQAQLGRGKRLRELLKQAQFSPLLLAEQVAIVYAGTKGLLDELPVEKVTEFVRELRDYLKTSKPEFINAIQTEKVMSESSEAILKDAIKQVVSGLLVAA.

170–177 serves as a coordination point for ATP; that stretch reads GDRQTGKT.

It belongs to the ATPase alpha/beta chains family. In terms of assembly, F-type ATPases have 2 components, CF(1) - the catalytic core - and CF(0) - the membrane proton channel. CF(1) has five subunits: alpha(3), beta(3), gamma(1), delta(1), epsilon(1). CF(0) has four main subunits: a(1), b(1), b'(1) and c(9-12).

It is found in the cellular thylakoid membrane. It catalyses the reaction ATP + H2O + 4 H(+)(in) = ADP + phosphate + 5 H(+)(out). In terms of biological role, produces ATP from ADP in the presence of a proton gradient across the membrane. The alpha chain is a regulatory subunit. The chain is ATP synthase subunit alpha from Synechococcus sp. (strain RCC307).